The chain runs to 421 residues: Lipid II:glycine glycyltransferase (421 aa).

The protein belongs to the FemABX family. Monomer.

The protein localises to the cytoplasm. It catalyses the reaction beta-D-GlcNAc-(1-&gt;4)-Mur2Ac(oyl-L-Ala-D-isoglutaminyl-L-Lys-D-Ala-D-Ala)-di-trans,octa-cis-undecaprenyl diphosphate + glycyl-tRNA(Gly) = beta-D-GlcNAc-(1-&gt;4)-Mur2Ac(oyl-L-Ala-D-isoglutaminyl-L-Lys-(N(6)-Gly)-D-Ala-D-Ala)-di-trans,octa-cis-undecaprenyl diphosphate + tRNA(Gly) + H(+). Functionally, catalyzes the incorporation of the first glycine of the pentaglycine interpeptide bridge, which is characteristic of the S.aureus peptidoglycan. This glycine is added to the epsilon-amino group of the L-lysine of the membrane-bound lipid II intermediate (GlcNAc-(beta-1,4)-N-acetylmuramic acid(-L-Ala-D-iGln-L-Lys-D-Ala-D-Ala)-pyrophosphoryl-undecaprenol), using glycyl-tRNA(Gly) as donor, in a ribosome-independent mechanism. Involved in methicillin resistance. The sequence is that of Lipid II:glycine glycyltransferase (femX) from Staphylococcus aureus (strain Mu50 / ATCC 700699).